A 246-amino-acid polypeptide reads, in one-letter code: Trypsin V-B (246 aa).

The N-terminal stretch at 1–15 (MKICIFFTLLGTVAA) is a signal peptide. Residues 16 to 24 (FPTEDNDDR) constitute a propeptide, activation peptide. Positions 25 to 244 (IVGGYTCQEH…YLNWIQQTVA (220 aa)) constitute a Peptidase S1 domain. 6 disulfides stabilise this stretch: Cys-31-Cys-160, Cys-49-Cys-65, Cys-133-Cys-233, Cys-140-Cys-206, Cys-171-Cys-185, and Cys-196-Cys-220. His-64 serves as the catalytic Charge relay system. Ca(2+)-binding residues include Glu-76, Asn-78, and Glu-86. Asp-108 serves as the catalytic Charge relay system. Ser-200 functions as the Charge relay system in the catalytic mechanism.

It belongs to the peptidase S1 family. It depends on Ca(2+) as a cofactor.

It is found in the secreted. The protein resides in the extracellular space. The enzyme catalyses Preferential cleavage: Arg-|-Xaa, Lys-|-Xaa.. The protein is Trypsin V-B of Rattus norvegicus (Rat).